We begin with the raw amino-acid sequence, 364 residues long: Ferrochelatase (364 aa).

Residues histidine 213 and glutamate 294 each contribute to the Fe cation site.

This sequence belongs to the ferrochelatase family.

The protein localises to the cytoplasm. It catalyses the reaction heme b + 2 H(+) = protoporphyrin IX + Fe(2+). The protein operates within porphyrin-containing compound metabolism; protoheme biosynthesis; protoheme from protoporphyrin-IX: step 1/1. In terms of biological role, catalyzes the ferrous insertion into protoporphyrin IX. This is Ferrochelatase from Chromobacterium violaceum (strain ATCC 12472 / DSM 30191 / JCM 1249 / CCUG 213 / NBRC 12614 / NCIMB 9131 / NCTC 9757 / MK).